The chain runs to 84 residues: Small ribosomal subunit protein bS20 (84 aa).

Residues 1-25 (MANIVSNEKTYRHTQKVRKENHAKM) form a disordered region.

It belongs to the bacterial ribosomal protein bS20 family.

Its function is as follows. Binds directly to 16S ribosomal RNA. The sequence is that of Small ribosomal subunit protein bS20 from Ureaplasma parvum serovar 3 (strain ATCC 700970).